Consider the following 326-residue polypeptide: Phenylserine dehydratase (326 aa).

In terms of assembly, monomer. Requires pyridoxal 5'-phosphate as cofactor.

It carries out the reaction L-threo-3-phenylserine = 3-phenylpyruvate + NH4(+). With respect to regulation, inhibited by phenylhydrazine, hydroxylamine, p-chloromercuribenzoate, and HgCl(2). In Ralstonia pickettii (Burkholderia pickettii), this protein is Phenylserine dehydratase.